Consider the following 419-residue polypeptide: tRNA(Ile)-lysidine synthase (419 aa).

An ATP-binding site is contributed by 31–36 (SGGGDS).

It belongs to the tRNA(Ile)-lysidine synthase family.

Its subcellular location is the cytoplasm. It carries out the reaction cytidine(34) in tRNA(Ile2) + L-lysine + ATP = lysidine(34) in tRNA(Ile2) + AMP + diphosphate + H(+). Ligates lysine onto the cytidine present at position 34 of the AUA codon-specific tRNA(Ile) that contains the anticodon CAU, in an ATP-dependent manner. Cytidine is converted to lysidine, thus changing the amino acid specificity of the tRNA from methionine to isoleucine. The sequence is that of tRNA(Ile)-lysidine synthase from Ruegeria pomeroyi (strain ATCC 700808 / DSM 15171 / DSS-3) (Silicibacter pomeroyi).